The following is a 213-amino-acid chain: 3-isopropylmalate dehydratase small subunit (213 aa).

This sequence belongs to the LeuD family. LeuD type 1 subfamily. Heterodimer of LeuC and LeuD.

The enzyme catalyses (2R,3S)-3-isopropylmalate = (2S)-2-isopropylmalate. It participates in amino-acid biosynthesis; L-leucine biosynthesis; L-leucine from 3-methyl-2-oxobutanoate: step 2/4. Functionally, catalyzes the isomerization between 2-isopropylmalate and 3-isopropylmalate, via the formation of 2-isopropylmaleate. The sequence is that of 3-isopropylmalate dehydratase small subunit from Neisseria meningitidis serogroup C / serotype 2a (strain ATCC 700532 / DSM 15464 / FAM18).